The chain runs to 382 residues: uncharacterized protein (382 aa).

Helical transmembrane passes span 8–28 (VMLLLCGLLLLTLAIAVLNTL), 45–65 (MVSSSYFTGNLVGTLFTGYLI), 75–95 (YLASLIFAAGCVGLGGMVGFW), 102–122 (FIAGIGCAMIWVVVESALMCS), 131–151 (LLAAYMMAYYMGTFLGQLLVS), 157–177 (LLHVLPWVTGMILAGILPLLF), 204–224 (LGVNGCIISGIVLGSLYGLMP), 231–251 (GMANASIGFWMAVLVSAGILG), 274–294 (VVILGSIAMLTQAAMAPALFI), 325–345 (ALLLSYTVGSLLGPSFAAMLM), and 349–369 (SDNLLFIMIASVSFIYLLMLL).

This sequence belongs to the major facilitator superfamily. YcaD (TC 2.A.1.26) family.

Its subcellular location is the cell inner membrane. This is an uncharacterized protein from Salmonella gallinarum (strain 287/91 / NCTC 13346).